The following is a 310-amino-acid chain: DnaJ-like protein MG002 (310 aa).

The region spanning 1–66 (MNLYDLLELP…KEKYDSMLKV (66 aa)) is the J domain.

The polypeptide is DnaJ-like protein MG002 (Mycoplasma genitalium (strain ATCC 33530 / DSM 19775 / NCTC 10195 / G37) (Mycoplasmoides genitalium)).